A 53-amino-acid chain; its full sequence is uncharacterized protein (53 aa).

This is an uncharacterized protein from Plasmodium falciparum (isolate fcm17 / Senegal).